We begin with the raw amino-acid sequence, 462 residues long: ATP synthase subunit beta (462 aa).

152–159 (GGAGVGKT) contributes to the ATP binding site.

The protein belongs to the ATPase alpha/beta chains family. In terms of assembly, F-type ATPases have 2 components, CF(1) - the catalytic core - and CF(0) - the membrane proton channel. CF(1) has five subunits: alpha(3), beta(3), gamma(1), delta(1), epsilon(1). CF(0) has three main subunits: a(1), b(2) and c(9-12). The alpha and beta chains form an alternating ring which encloses part of the gamma chain. CF(1) is attached to CF(0) by a central stalk formed by the gamma and epsilon chains, while a peripheral stalk is formed by the delta and b chains.

Its subcellular location is the cell inner membrane. It carries out the reaction ATP + H2O + 4 H(+)(in) = ADP + phosphate + 5 H(+)(out). Its function is as follows. Produces ATP from ADP in the presence of a proton gradient across the membrane. The catalytic sites are hosted primarily by the beta subunits. The polypeptide is ATP synthase subunit beta (Shewanella amazonensis (strain ATCC BAA-1098 / SB2B)).